A 939-amino-acid polypeptide reads, in one-letter code: MADYRKTLNMPDTPFPMRGDLAKREPGWVADWQAKKLYQKVRKAAAGRPKFVLHDGPPYANGDIHIGHAVNKILKDIIVRSKTLAGFDAPYVPGWDCHGLPIEHQIEKQHGKHLPADRARELCREYAAEQIERQKKDFIRLGVLGDWDNPYRTMNFSNEADEIRALGELFRKGFLFKGLKPVNWCFDCGSALAEAEVEYQDKKSPAIDVGFPLVDNERDKLAHAFGLDTLPEQPVYIVIWTTTPWTIPSNQALNVHPELIYELVETPKGLLILAAELRASALERYQLEGRVLAAARGVALDRINFRHPFYDRLSPVFLGDYVAADAGTGIVHSAPAYGLDDFVSCTRYGMRNDEILNPVQADGTFAGSLPFFGGLSVWDANPKIVDKLAEVGSLFASGTLTHSYMHCWRHKTPVIYRATTQWFVGMDRLPGREAVEPGSATLRELALKAVDETQFYPAWGKARLHSMIANRPDWCVSRQRNWGVPIPLFLHKETGEPHPRSLELLEQVAQRVEQHGIDAWFKLDAAELLGSDVAQYDKMRDTLDVWFDSGTTHWTVLRGSHAADSQWPAALYLEGSDQHRGWFHSSLLTGCAIDGRAPYDALLTHGFVVDGQGKKMSKSKGNVVAPQEVSDKLGAEILRLWVAATDYSGELTISKEILDRVVEVYRRLRNTLRFLLANTGDFDIARDGVPVEEWLDIDHYALALTRRLQEQVTGDYARFEFHKIVQALQNFAAEDLGAFYVDILKDRLYTTKADSRARRAAQTALWHITQAITRMMAPILTFTAEEIWRVTGNDAEDSVMLHTWHELPELGASDEILARWELIRSARAEVQKVLESLRSDGRIGASLQAEVRVRASGARFDALASVGADLHFVLITSRAELVRVETEADEGVDAAPSSHQKCGRCWHFREDIGVDADHPELCGRCCTNLHGDGESRTHA.

The 'HIGH' region signature appears at 58–68; the sequence is PYANGDIHIGH. Glu-574 is an L-isoleucyl-5'-AMP binding site. A 'KMSKS' region motif is present at residues 615-619; sequence KMSKS. Lys-618 contributes to the ATP binding site. Zn(2+) contacts are provided by Cys-902, Cys-905, Cys-922, and Cys-925.

The protein belongs to the class-I aminoacyl-tRNA synthetase family. IleS type 1 subfamily. Monomer. It depends on Zn(2+) as a cofactor.

Its subcellular location is the cytoplasm. It carries out the reaction tRNA(Ile) + L-isoleucine + ATP = L-isoleucyl-tRNA(Ile) + AMP + diphosphate. Its function is as follows. Catalyzes the attachment of isoleucine to tRNA(Ile). As IleRS can inadvertently accommodate and process structurally similar amino acids such as valine, to avoid such errors it has two additional distinct tRNA(Ile)-dependent editing activities. One activity is designated as 'pretransfer' editing and involves the hydrolysis of activated Val-AMP. The other activity is designated 'posttransfer' editing and involves deacylation of mischarged Val-tRNA(Ile). The polypeptide is Isoleucine--tRNA ligase (Aromatoleum aromaticum (strain DSM 19018 / LMG 30748 / EbN1) (Azoarcus sp. (strain EbN1))).